A 346-amino-acid chain; its full sequence is PhoH-like protein (346 aa).

142 to 149 is a binding site for ATP; sequence GPAGTGKT.

It belongs to the PhoH family.

The protein resides in the cytoplasm. This is PhoH-like protein (ybeZ) from Escherichia coli O157:H7.